Consider the following 69-residue polypeptide: Large ribosomal subunit protein bL31 (69 aa).

Zn(2+) contacts are provided by Cys16, Cys18, Cys37, and Cys40.

Belongs to the bacterial ribosomal protein bL31 family. Type A subfamily. In terms of assembly, part of the 50S ribosomal subunit. The cofactor is Zn(2+).

In terms of biological role, binds the 23S rRNA. This Syntrophotalea carbinolica (strain DSM 2380 / NBRC 103641 / GraBd1) (Pelobacter carbinolicus) protein is Large ribosomal subunit protein bL31.